The primary structure comprises 538 residues: Pentachlorophenol 4-monooxygenase (538 aa).

FAD contacts are provided by residues 16-45 (AVLIVGGGPTGLIAANELLRRGVSCRMIDR) and 288-298 (YRKGNVFLAGD).

The protein belongs to the PheA/TfdB FAD monooxygenase family. Homodimer. FAD is required as a cofactor.

It catalyses the reaction pentachlorophenol + NADPH + O2 + H(+) = 2,3,5,6-tetrachloro-1,4-benzoquinone + chloride + NADP(+) + H2O. It carries out the reaction 2,3,5,6-tetrachlorophenol + NADPH + O2 = 2,3,5,6-tetrachlorohydroquinone + NADP(+) + H2O. Its pathway is xenobiotic degradation; pentachlorophenol degradation. In terms of biological role, dechlorination of pentachlorophenol to tetrachlorobenzoquinone. Also removes hydrogen and nitro, amino, and cyano groups from benzene ring at the para position in relation to the hydroxyl of phenol. The polypeptide is Pentachlorophenol 4-monooxygenase (pcpB) (Sphingobium chlorophenolicum).